Here is a 464-residue protein sequence, read N- to C-terminus: NADH-quinone oxidoreductase subunit N 1 (464 aa).

Helical transmembrane passes span 6-26, 33-53, 65-85, 98-118, 122-142, 155-175, 192-212, 237-257, 259-279, 285-305, 312-332, 356-376, 401-421, and 436-456; these read ILPEAILAIGILTVFILELFL, FLSVLAFIFVVLSGYSIFFVN, VDALNLIGKLFILAVTGFVLL, YGELPYLYLIATLGLMVMISS, AIIFTGLELASITMYILVGLF, YLVIGTTGTSMYALGSALVYA, FALGVILIISALALKVSAVPF, IGMYFLFVKLTMYLFSAFPDW, YVVMLLAVLSMFYGNIVAYAQ, LLAYSSIAHAGYFLTALTAVD, LLFYVFVYALATVGAFTVLAI, LASMLALFLFALIGIPPAAVF, ASLISAGYYLKVIVYMFLYSG, and FTVLGTAFLVIFFGLFPHVVL.

The protein belongs to the complex I subunit 2 family. NDH-1 is composed of 14 different subunits. Subunits NuoA, H, J, K, L, M, N constitute the membrane sector of the complex.

The protein resides in the cell inner membrane. The catalysed reaction is a quinone + NADH + 5 H(+)(in) = a quinol + NAD(+) + 4 H(+)(out). NDH-1 shuttles electrons from NADH, via FMN and iron-sulfur (Fe-S) centers, to quinones in the respiratory chain. The immediate electron acceptor for the enzyme in this species is believed to be ubiquinone. Couples the redox reaction to proton translocation (for every two electrons transferred, four hydrogen ions are translocated across the cytoplasmic membrane), and thus conserves the redox energy in a proton gradient. The protein is NADH-quinone oxidoreductase subunit N 1 of Aquifex aeolicus (strain VF5).